Consider the following 105-residue polypeptide: Integration host factor subunit beta (105 aa).

This sequence belongs to the bacterial histone-like protein family. As to quaternary structure, heterodimer of an alpha and a beta chain.

Functionally, this protein is one of the two subunits of integration host factor, a specific DNA-binding protein that functions in genetic recombination as well as in transcriptional and translational control. The sequence is that of Integration host factor subunit beta from Nitrosomonas europaea (strain ATCC 19718 / CIP 103999 / KCTC 2705 / NBRC 14298).